A 240-amino-acid polypeptide reads, in one-letter code: Aliphatic sulfonates import ATP-binding protein SsuB 2 (240 aa).

One can recognise an ABC transporter domain in the interval 2–218 (VRTRELRRGF…RHSAPEFIHA (217 aa)). 34 to 41 (GRSGSGKS) is an ATP binding site.

Belongs to the ABC transporter superfamily. Aliphatic sulfonates importer (TC 3.A.1.17.2) family. As to quaternary structure, the complex is composed of two ATP-binding proteins (SsuB), two transmembrane proteins (SsuC) and a solute-binding protein (SsuA).

The protein localises to the cell membrane. The enzyme catalyses ATP + H2O + aliphatic sulfonate-[sulfonate-binding protein]Side 1 = ADP + phosphate + aliphatic sulfonateSide 2 + [sulfonate-binding protein]Side 1.. Part of the ABC transporter complex SsuABC involved in aliphatic sulfonates import. Responsible for energy coupling to the transport system. This chain is Aliphatic sulfonates import ATP-binding protein SsuB 2, found in Nocardia farcinica (strain IFM 10152).